A 136-amino-acid polypeptide reads, in one-letter code: Large ribosomal subunit protein eL27 (136 aa).

The 36-residue stretch at 5-40 (MKPGKVVMVLAGRYAGRKAVIVKNIDDGTADRPYSH) folds into the KOW domain.

It belongs to the eukaryotic ribosomal protein eL27 family. In terms of assembly, component of the large ribosomal subunit.

The protein localises to the cytoplasm. It is found in the cytosol. It localises to the rough endoplasmic reticulum. Component of the large ribosomal subunit. The polypeptide is Large ribosomal subunit protein eL27 (rpl27) (Ictalurus punctatus (Channel catfish)).